The following is a 219-amino-acid chain: ATP-dependent Clp protease proteolytic subunit (219 aa).

Ser101 acts as the Nucleophile in catalysis. The active site involves His126.

It belongs to the peptidase S14 family. Component of the chloroplastic Clp protease core complex.

The protein localises to the plastid. It localises to the chloroplast stroma. It catalyses the reaction Hydrolysis of proteins to small peptides in the presence of ATP and magnesium. alpha-casein is the usual test substrate. In the absence of ATP, only oligopeptides shorter than five residues are hydrolyzed (such as succinyl-Leu-Tyr-|-NHMec, and Leu-Tyr-Leu-|-Tyr-Trp, in which cleavage of the -Tyr-|-Leu- and -Tyr-|-Trp bonds also occurs).. Its function is as follows. Cleaves peptides in various proteins in a process that requires ATP hydrolysis. Has a chymotrypsin-like activity. Plays a major role in the degradation of misfolded proteins. In Chara vulgaris (Common stonewort), this protein is ATP-dependent Clp protease proteolytic subunit.